We begin with the raw amino-acid sequence, 447 residues long: Tubulin beta-2 chain (447 aa).

GTP is bound by residues Gln-11, Glu-69, Ser-138, Gly-142, Thr-143, Gly-144, Asn-204, and Asn-226. Glu-69 is a Mg(2+) binding site. Positions 426-447 (QDAGVDEEEEEYEDDAPLEEEV) are disordered. Over residues 429–447 (GVDEEEEEYEDDAPLEEEV) the composition is skewed to acidic residues.

This sequence belongs to the tubulin family. In terms of assembly, dimer of alpha and beta chains. A typical microtubule is a hollow water-filled tube with an outer diameter of 25 nm and an inner diameter of 15 nM. Alpha-beta heterodimers associate head-to-tail to form protofilaments running lengthwise along the microtubule wall with the beta-tubulin subunit facing the microtubule plus end conferring a structural polarity. Microtubules usually have 13 protofilaments but different protofilament numbers can be found in some organisms and specialized cells. Mg(2+) is required as a cofactor.

Its subcellular location is the cytoplasm. The protein resides in the cytoskeleton. Functionally, tubulin is the major constituent of microtubules, a cylinder consisting of laterally associated linear protofilaments composed of alpha- and beta-tubulin heterodimers. Microtubules grow by the addition of GTP-tubulin dimers to the microtubule end, where a stabilizing cap forms. Below the cap, tubulin dimers are in GDP-bound state, owing to GTPase activity of alpha-tubulin. The sequence is that of Tubulin beta-2 chain (TUB2) from Colletotrichum graminicola (Maize anthracnose fungus).